The primary structure comprises 219 residues: Chalcone--flavanone isomerase (219 aa).

Residues Thr-50, Asn-115, and Ser-192 each coordinate substrate.

Belongs to the chalcone isomerase family.

The catalysed reaction is a chalcone = a flavanone.. It participates in secondary metabolite biosynthesis; flavonoid biosynthesis. Catalyzes the intramolecular cyclization of bicyclic chalcones into tricyclic (S)-flavanones. Responsible for the isomerization of 4,2',4',6'-tetrahydroxychalcone (also termed chalcone) into naringenin. The protein is Chalcone--flavanone isomerase (CHI) of Pyrus communis (Pear).